A 771-amino-acid chain; its full sequence is Rho guanine nucleotide exchange factor 6 (771 aa).

Residues 1 to 111 (MNPEERLVTW…TLLAVNKATE (111 aa)) enclose the Calponin-homology (CH) domain. The tract at residues 115 to 157 (SERPCGRSSSLSAATSSQTNPQVAVPSTAPEQHSEEKAEMTEN) is disordered. Positions 122–131 (SSSLSAATSS) are enriched in low complexity. Serine 126 is modified (phosphoserine). The residue at position 133 (threonine 133) is a Phosphothreonine. Residues 159–218 (SHQLIVKARFNFKQTNEDELSVCKGDIIYVTRVEEGGWWEGTLNGRTGWFPSNYVREIKP) enclose the SH3 domain. Serine 224 is subject to Phosphoserine. The DH domain occupies 240–420 (YYTVVLQNIL…KTLMGQCQDL (181 aa)). One can recognise a PH domain in the interval 442 to 547 (DIKTLGNVIF…WMEQLNRLTK (106 aa)). Serine 487 carries the phosphoserine modification. Over residues 556–572 (SKTSSSSCSTHSSFSST) the composition is skewed to low complexity. A disordered region spans residues 556–580 (SKTSSSSCSTHSSFSSTGQPRGPLE). Phosphoserine is present on residues serine 639 and serine 679.

Interacts with PAK kinases through the SH3 domain. Interacts with GIT1. Component of cytoplasmic complexes, which also contain PXN, GIT1 and PAK1. Interacts with BIN2. Identified in a complex with BIN2 and GIT2. Interacts with PARVB. Interacts with PARVG; the guanine nucleotide exchange factor activity of ARHGEF6 is essential for PARVG-induced enhancement of cell spreading. As to expression, detected in adult heart, spleen, lung, skeletal muscle, kidney and testis. Detected throughout embryogenesis.

The protein resides in the cell projection. It localises to the lamellipodium. Acts as a RAC1 guanine nucleotide exchange factor (GEF). This is Rho guanine nucleotide exchange factor 6 (Arhgef6) from Mus musculus (Mouse).